Consider the following 283-residue polypeptide: NFU1 iron-sulfur cluster scaffold homolog, mitochondrial (283 aa).

The N-terminal 30 residues, 1–30, are a transit peptide targeting the mitochondrion; the sequence is MSKFLSQAALNTLRNTRLGSRQLVRSFAGI. Positions 182-250 are nifU; it reads IKELLDTRIR…IPEVESVEQV (69 aa). Positions 219 and 222 each coordinate [4Fe-4S] cluster.

This sequence belongs to the NifU family.

It is found in the mitochondrion. Its function is as follows. Molecular scaffold for [Fe-S] cluster assembly of mitochondrial iron-sulfur proteins. The sequence is that of NFU1 iron-sulfur cluster scaffold homolog, mitochondrial from Drosophila erecta (Fruit fly).